The sequence spans 185 residues: Lactoylglutathione lyase (185 aa).

Residues 1–22 are disordered; sequence MASEARESPANNPGLSTNRDEA. The VOC domain occupies 27–174; it reads IMQQTMFRIK…DGYWIEIFDL (148 aa). Residues Gln-30 and Arg-34 each contribute to the substrate site. Residue Gln-30 participates in Zn(2+) binding. Glu-96 is a binding site for Zn(2+). Residues Asn-100, Arg-120, His-124, and 154 to 155 contribute to the substrate site; that span reads KM. Zn(2+) is bound at residue His-124. Glu-170 contacts Zn(2+). The Proton donor/acceptor role is filled by Glu-170.

Belongs to the glyoxalase I family. The cofactor is Zn(2+).

It carries out the reaction (R)-S-lactoylglutathione = methylglyoxal + glutathione. It functions in the pathway secondary metabolite metabolism; methylglyoxal degradation; (R)-lactate from methylglyoxal: step 1/2. Functionally, catalyzes the conversion of hemimercaptal, formed from methylglyoxal and glutathione, to S-lactoylglutathione. The protein is Lactoylglutathione lyase of Arabidopsis thaliana (Mouse-ear cress).